A 404-amino-acid polypeptide reads, in one-letter code: S-adenosylmethionine synthase (404 aa).

Histidine 16 provides a ligand contact to ATP. Aspartate 18 is a binding site for Mg(2+). Glutamate 44 contacts K(+). L-methionine contacts are provided by glutamate 57 and glutamine 100. The tract at residues glutamine 100–arginine 110 is flexible loop. ATP contacts are provided by residues aspartate 177–lysine 179, aspartate 257, arginine 263–lysine 264, alanine 280, and lysine 284. Position 257 (aspartate 257) interacts with L-methionine. Lysine 288 serves as a coordination point for L-methionine.

The protein belongs to the AdoMet synthase family. Homotetramer; dimer of dimers. Mg(2+) serves as cofactor. Requires K(+) as cofactor.

The protein localises to the cytoplasm. It catalyses the reaction L-methionine + ATP + H2O = S-adenosyl-L-methionine + phosphate + diphosphate. It functions in the pathway amino-acid biosynthesis; S-adenosyl-L-methionine biosynthesis; S-adenosyl-L-methionine from L-methionine: step 1/1. Catalyzes the formation of S-adenosylmethionine (AdoMet) from methionine and ATP. The overall synthetic reaction is composed of two sequential steps, AdoMet formation and the subsequent tripolyphosphate hydrolysis which occurs prior to release of AdoMet from the enzyme. The sequence is that of S-adenosylmethionine synthase from Bifidobacterium adolescentis (strain ATCC 15703 / DSM 20083 / NCTC 11814 / E194a).